We begin with the raw amino-acid sequence, 505 residues long: Catalase (505 aa).

The disordered stretch occupies residues 1 to 25 (MSRQDKKLTGVFGHPVSDRENSMTA). Catalysis depends on residues His-56 and Asn-129. A heme-binding site is contributed by Tyr-339.

This sequence belongs to the catalase family. As to quaternary structure, homodimer. Heme serves as cofactor.

The catalysed reaction is 2 H2O2 = O2 + 2 H2O. Its function is as follows. Decomposes hydrogen peroxide into water and oxygen; serves to protect cells from the toxic effects of hydrogen peroxide. The protein is Catalase (katA) of Staphylococcus aureus (strain MRSA252).